Here is a 422-residue protein sequence, read N- to C-terminus: UDP-N-acetylglucosamine 1-carboxyvinyltransferase (422 aa).

Phosphoenolpyruvate is bound at residue 23-24 (KN). R92 is a UDP-N-acetyl-alpha-D-glucosamine binding site. The active-site Proton donor is the C116. At C116 the chain carries 2-(S-cysteinyl)pyruvic acid O-phosphothioketal. Residues 121 to 125 (RPVDL), 161 to 165 (KVSVG), D306, and I328 each bind UDP-N-acetyl-alpha-D-glucosamine.

This sequence belongs to the EPSP synthase family. MurA subfamily.

Its subcellular location is the cytoplasm. The enzyme catalyses phosphoenolpyruvate + UDP-N-acetyl-alpha-D-glucosamine = UDP-N-acetyl-3-O-(1-carboxyvinyl)-alpha-D-glucosamine + phosphate. It functions in the pathway cell wall biogenesis; peptidoglycan biosynthesis. Its function is as follows. Cell wall formation. Adds enolpyruvyl to UDP-N-acetylglucosamine. In Aliivibrio fischeri (strain MJ11) (Vibrio fischeri), this protein is UDP-N-acetylglucosamine 1-carboxyvinyltransferase.